The sequence spans 272 residues: 3-methyl-2-oxobutanoate hydroxymethyltransferase (272 aa).

Residues Asp43 and Asp82 each contribute to the Mg(2+) site. 3-methyl-2-oxobutanoate contacts are provided by residues 43 to 44 (DS), Asp82, and Lys112. Residue Glu114 coordinates Mg(2+). Glu179 acts as the Proton acceptor in catalysis.

This sequence belongs to the PanB family. In terms of assembly, homodecamer; pentamer of dimers. Mg(2+) serves as cofactor.

The protein resides in the cytoplasm. It catalyses the reaction 3-methyl-2-oxobutanoate + (6R)-5,10-methylene-5,6,7,8-tetrahydrofolate + H2O = 2-dehydropantoate + (6S)-5,6,7,8-tetrahydrofolate. The protein operates within cofactor biosynthesis; (R)-pantothenate biosynthesis; (R)-pantoate from 3-methyl-2-oxobutanoate: step 1/2. Functionally, catalyzes the reversible reaction in which hydroxymethyl group from 5,10-methylenetetrahydrofolate is transferred onto alpha-ketoisovalerate to form ketopantoate. The sequence is that of 3-methyl-2-oxobutanoate hydroxymethyltransferase from Staphylococcus aureus (strain MRSA252).